Here is a 520-residue protein sequence, read N- to C-terminus: Putative cytochrome P450 CYP13A4 (520 aa).

Cys464 lines the heme pocket.

This sequence belongs to the cytochrome P450 family. The cofactor is heme.

In terms of biological role, cytochromes P450 are a group of heme-thiolate monooxygenases. They oxidize a variety of structurally unrelated compounds, including steroids, fatty acids, and xenobiotics. This Caenorhabditis elegans protein is Putative cytochrome P450 CYP13A4 (cyp-13A4).